Consider the following 154-residue polypeptide: 6,7-dimethyl-8-ribityllumazine synthase (154 aa).

Residues F23, 57-59 (AYE), and 81-83 (AVI) each bind 5-amino-6-(D-ribitylamino)uracil. Residue 86-87 (AT) participates in (2S)-2-hydroxy-3-oxobutyl phosphate binding. H89 acts as the Proton donor in catalysis. F114 contributes to the 5-amino-6-(D-ribitylamino)uracil binding site. R128 is a (2S)-2-hydroxy-3-oxobutyl phosphate binding site.

The protein belongs to the DMRL synthase family.

The catalysed reaction is (2S)-2-hydroxy-3-oxobutyl phosphate + 5-amino-6-(D-ribitylamino)uracil = 6,7-dimethyl-8-(1-D-ribityl)lumazine + phosphate + 2 H2O + H(+). Its pathway is cofactor biosynthesis; riboflavin biosynthesis; riboflavin from 2-hydroxy-3-oxobutyl phosphate and 5-amino-6-(D-ribitylamino)uracil: step 1/2. In terms of biological role, catalyzes the formation of 6,7-dimethyl-8-ribityllumazine by condensation of 5-amino-6-(D-ribitylamino)uracil with 3,4-dihydroxy-2-butanone 4-phosphate. This is the penultimate step in the biosynthesis of riboflavin. The polypeptide is 6,7-dimethyl-8-ribityllumazine synthase (Desulforamulus reducens (strain ATCC BAA-1160 / DSM 100696 / MI-1) (Desulfotomaculum reducens)).